Reading from the N-terminus, the 126-residue chain is Aspartate 1-decarboxylase (126 aa).

Serine 25 (schiff-base intermediate with substrate; via pyruvic acid) is an active-site residue. Position 25 is a pyruvic acid (Ser) (serine 25). Threonine 57 contacts substrate. Tyrosine 58 acts as the Proton donor in catalysis. Substrate is bound at residue 73 to 75 (GAA).

This sequence belongs to the PanD family. As to quaternary structure, heterooctamer of four alpha and four beta subunits. Pyruvate serves as cofactor. Is synthesized initially as an inactive proenzyme, which is activated by self-cleavage at a specific serine bond to produce a beta-subunit with a hydroxyl group at its C-terminus and an alpha-subunit with a pyruvoyl group at its N-terminus.

It localises to the cytoplasm. The enzyme catalyses L-aspartate + H(+) = beta-alanine + CO2. It participates in cofactor biosynthesis; (R)-pantothenate biosynthesis; beta-alanine from L-aspartate: step 1/1. Catalyzes the pyruvoyl-dependent decarboxylation of aspartate to produce beta-alanine. This chain is Aspartate 1-decarboxylase, found in Salmonella dublin (strain CT_02021853).